The primary structure comprises 1012 residues: Ankyrin repeat- and BTB/POZ domain-containing protein 3-B (1012 aa).

A helical membrane pass occupies residues 160-180 (ILSWTISVNCIAASLSALSMY). ANK repeat units follow at residues 511–540 (QGMT…DINS), 557–586 (RQAT…NVEG), and 595–624 (YTET…DPMI). Residues 831 to 897 (SDVTFLVEGK…LYCGGTDALH (67 aa)) form the BTB domain.

Its subcellular location is the membrane. The sequence is that of Ankyrin repeat- and BTB/POZ domain-containing protein 3-B (abtb3b) from Danio rerio (Zebrafish).